Reading from the N-terminus, the 293-residue chain is Transcription initiation factor IIB 2 (293 aa).

The TFIIB-type zinc finger occupies 1-31 (MKCPYCKTDNAITYDVEKGMYVCTNCASVIE). Zn(2+) contacts are provided by Cys-3, Cys-6, Cys-23, and Cys-26. 2 consecutive repeat copies span residues 107-193 (SILN…ANSI) and 204-285 (EYIP…DIVD).

Belongs to the TFIIB family.

In terms of biological role, stabilizes TBP binding to an archaeal box-A promoter. Also responsible for recruiting RNA polymerase II to the pre-initiation complex (DNA-TBP-TFIIB). This Saccharolobus solfataricus (strain ATCC 35092 / DSM 1617 / JCM 11322 / P2) (Sulfolobus solfataricus) protein is Transcription initiation factor IIB 2.